The chain runs to 302 residues: Phosphoribosylaminoimidazole-succinocarboxamide synthase (302 aa).

Belongs to the SAICAR synthetase family.

It carries out the reaction 5-amino-1-(5-phospho-D-ribosyl)imidazole-4-carboxylate + L-aspartate + ATP = (2S)-2-[5-amino-1-(5-phospho-beta-D-ribosyl)imidazole-4-carboxamido]succinate + ADP + phosphate + 2 H(+). The protein operates within purine metabolism; IMP biosynthesis via de novo pathway; 5-amino-1-(5-phospho-D-ribosyl)imidazole-4-carboxamide from 5-amino-1-(5-phospho-D-ribosyl)imidazole-4-carboxylate: step 1/2. In Cupriavidus metallidurans (strain ATCC 43123 / DSM 2839 / NBRC 102507 / CH34) (Ralstonia metallidurans), this protein is Phosphoribosylaminoimidazole-succinocarboxamide synthase.